Consider the following 641-residue polypeptide: Acetyl-coenzyme A synthetase (641 aa).

Residues 186–189 and Thr304 each bind CoA; that span reads RGGK. Residues 380–382, 404–409, Asp493, and Arg508 contribute to the ATP site; these read GEP and DTWWQT. Ser516 contributes to the CoA binding site. Arg519 lines the ATP pocket. Residues Val530, His532, and Ile535 each coordinate Mg(2+). An N6-acetyllysine modification is found at Lys602.

The protein belongs to the ATP-dependent AMP-binding enzyme family. Mg(2+) is required as a cofactor. Post-translationally, acetylated. Deacetylation by the SIR2-homolog deacetylase activates the enzyme.

It carries out the reaction acetate + ATP + CoA = acetyl-CoA + AMP + diphosphate. Its function is as follows. Catalyzes the conversion of acetate into acetyl-CoA (AcCoA), an essential intermediate at the junction of anabolic and catabolic pathways. AcsA undergoes a two-step reaction. In the first half reaction, AcsA combines acetate with ATP to form acetyl-adenylate (AcAMP) intermediate. In the second half reaction, it can then transfer the acetyl group from AcAMP to the sulfhydryl group of CoA, forming the product AcCoA. The chain is Acetyl-coenzyme A synthetase from Gamma-proteobacterium EBAC31A08.